The following is a 251-amino-acid chain: Ubiquinone/menaquinone biosynthesis C-methyltransferase UbiE (251 aa).

S-adenosyl-L-methionine contacts are provided by residues Thr74, Asp95, and 123 to 124 (NA).

Belongs to the class I-like SAM-binding methyltransferase superfamily. MenG/UbiE family.

The enzyme catalyses a 2-demethylmenaquinol + S-adenosyl-L-methionine = a menaquinol + S-adenosyl-L-homocysteine + H(+). It catalyses the reaction a 2-methoxy-6-(all-trans-polyprenyl)benzene-1,4-diol + S-adenosyl-L-methionine = a 5-methoxy-2-methyl-3-(all-trans-polyprenyl)benzene-1,4-diol + S-adenosyl-L-homocysteine + H(+). Its pathway is quinol/quinone metabolism; menaquinone biosynthesis; menaquinol from 1,4-dihydroxy-2-naphthoate: step 2/2. It functions in the pathway cofactor biosynthesis; ubiquinone biosynthesis. Functionally, methyltransferase required for the conversion of demethylmenaquinol (DMKH2) to menaquinol (MKH2) and the conversion of 2-polyprenyl-6-methoxy-1,4-benzoquinol (DDMQH2) to 2-polyprenyl-3-methyl-6-methoxy-1,4-benzoquinol (DMQH2). This is Ubiquinone/menaquinone biosynthesis C-methyltransferase UbiE from Shewanella piezotolerans (strain WP3 / JCM 13877).